The following is a 415-amino-acid chain: Corticotropin-releasing factor receptor 1 (415 aa).

An N-terminal signal peptide occupies residues methionine 1–alanine 23. Residues serine 24–lysine 111 lie on the Extracellular side of the membrane. 3 disulfides stabilise this stretch: cysteine 30/cysteine 54, cysteine 44/cysteine 87, and cysteine 68/cysteine 102. N-linked (GlcNAc...) asparagine glycosylation is found at asparagine 38, asparagine 45, asparagine 51, asparagine 78, asparagine 90, and asparagine 98. The tract at residues histidine 99–glutamate 108 is important for peptide agonist binding. The chain crosses the membrane as a helical span at residues serine 112–leucine 142. Residues arginine 143–cysteine 149 lie on the Cytoplasmic side of the membrane. Residues valine 150 to leucine 174 form a helical membrane-spanning segment. Over threonine 175–arginine 189 the chain is Extracellular. A disulfide bond links cysteine 188 and cysteine 258. Residues leucine 190–valine 218 traverse the membrane as a helical segment. The Cytoplasmic portion of the chain corresponds to leucine 219–arginine 225. Residues leucine 226–tyrosine 253 form a helical membrane-spanning segment. The Extracellular portion of the chain corresponds to aspartate 254–aspartate 269. Residues tyrosine 270–methionine 295 form a helical membrane-spanning segment. Positions leucine 280–isoleucine 290 are important for antagonist binding. Residues threonine 296 to threonine 306 lie on the Cytoplasmic side of the membrane. The residue at position 301 (serine 301) is a Phosphoserine; by PKA. Residues isoleucine 307–phenylalanine 331 traverse the membrane as a helical segment. Residues valine 332–glutamate 338 are Extracellular-facing. The helical transmembrane segment at valine 339–serine 368 threads the bilayer. The Cytoplasmic portion of the chain corresponds to glutamate 369–valine 415.

Belongs to the G-protein coupled receptor 2 family. Heterodimer; heterodimerizes with GPER1. Interacts (via N-terminal extracellular domain) with CRH and UCN. Interacts with DLG1; this inhibits endocytosis of CRHR1 after agonist binding. In terms of processing, C-terminal Ser or Thr residues may be phosphorylated. Phosphorylation at Ser-301 by PKA prevents maximal coupling to Gq-protein, and thereby negatively regulates downstream signaling.

Its subcellular location is the cell membrane. The protein resides in the endosome. In terms of biological role, G-protein coupled receptor for CRH (corticotropin-releasing factor) and UCN (urocortin). Has high affinity for CRH and UCN. Ligand binding causes a conformation change that triggers signaling via guanine nucleotide-binding proteins (G proteins) and down-stream effectors, such as adenylate cyclase. Promotes the activation of adenylate cyclase, leading to increased intracellular cAMP levels. Inhibits the activity of the calcium channel CACNA1H. Required for normal embryonic development of the adrenal gland and for normal hormonal responses to stress. Plays a role in the response to anxiogenic stimuli. This is Corticotropin-releasing factor receptor 1 (CRHR1) from Ovis aries (Sheep).